Here is a 100-residue protein sequence, read N- to C-terminus: Large ribosomal subunit protein uL23 (100 aa).

It belongs to the universal ribosomal protein uL23 family. In terms of assembly, part of the 50S ribosomal subunit. Contacts protein L29, and trigger factor when it is bound to the ribosome.

In terms of biological role, one of the early assembly proteins it binds 23S rRNA. One of the proteins that surrounds the polypeptide exit tunnel on the outside of the ribosome. Forms the main docking site for trigger factor binding to the ribosome. In Synechococcus sp. (strain CC9311), this protein is Large ribosomal subunit protein uL23.